The sequence spans 205 residues: Holliday junction branch migration complex subunit RuvA (205 aa).

Positions 1-64 (MIGRLRGIVL…EDAQLLYGFN (64 aa)) are domain I. Residues 65 to 143 (DKQERALFRE…GLNGDLFNQS (79 aa)) form a domain II region. The segment at 144 to 156 (SDINLPATAKQTT) is flexible linker. The interval 157-205 (SDADSEAEAAAALVSLGYKPQEASRMVSKIAKPGADCETLIREALRAVL) is domain III.

Belongs to the RuvA family. Homotetramer. Forms an RuvA(8)-RuvB(12)-Holliday junction (HJ) complex. HJ DNA is sandwiched between 2 RuvA tetramers; dsDNA enters through RuvA and exits via RuvB. An RuvB hexamer assembles on each DNA strand where it exits the tetramer. Each RuvB hexamer is contacted by two RuvA subunits (via domain III) on 2 adjacent RuvB subunits; this complex drives branch migration. In the full resolvosome a probable DNA-RuvA(4)-RuvB(12)-RuvC(2) complex forms which resolves the HJ.

It localises to the cytoplasm. Its function is as follows. The RuvA-RuvB-RuvC complex processes Holliday junction (HJ) DNA during genetic recombination and DNA repair, while the RuvA-RuvB complex plays an important role in the rescue of blocked DNA replication forks via replication fork reversal (RFR). RuvA specifically binds to HJ cruciform DNA, conferring on it an open structure. The RuvB hexamer acts as an ATP-dependent pump, pulling dsDNA into and through the RuvAB complex. HJ branch migration allows RuvC to scan DNA until it finds its consensus sequence, where it cleaves and resolves the cruciform DNA. In Photorhabdus laumondii subsp. laumondii (strain DSM 15139 / CIP 105565 / TT01) (Photorhabdus luminescens subsp. laumondii), this protein is Holliday junction branch migration complex subunit RuvA.